Consider the following 349-residue polypeptide: 2-oxoglutarate-Fe(II) type oxidoreductase ppzD (349 aa).

A Fe2OG dioxygenase domain is found at 200 to 311 (NTSELRLNHY…RYSVAYFGKP (112 aa)). Residues H227, D229, and H287 each contribute to the Fe cation site. R302 lines the 2-oxoglutarate pocket.

The protein belongs to the iron/ascorbate-dependent oxidoreductase family. It depends on Fe(2+) as a cofactor.

The enzyme catalyses L-proline + 2-oxoglutarate + O2 = trans-4-hydroxy-L-proline + succinate + CO2. It catalyses the reaction L-proline + 2-oxoglutarate + O2 = trans-3-hydroxy-L-proline + succinate + CO2. The catalysed reaction is D-proline + 2-oxoglutarate + O2 = cis-4-hydroxy-D-proline + succinate + CO2. It participates in secondary metabolite biosynthesis. Its function is as follows. 2-oxoglutarate-Fe(II) type oxidoreductase; part of the gene cluster that mediates the biosynthesis of pyrrolopyrazines, secondary metabolites showing insecticidal activity. Within the pathway, ppzD converts L-proline into trans-4-hydroxy-L-proline as a major product, yielding a key precursor for peramine biosynthesis. PpzD is also able to convert L-proline into trans-3-hydroxy-L-proline. The single multifunctional NRPS ppzA is sufficient to produce peramine via condensation of 1-pyrroline-5-carboxylate and arginine, N-methylation of the alpha-amino group of arginine and reduction of the thioester and the cyclization to form an iminium ion resulting in release from the peptide synthetase. Deprotonation of this intermediate and oxidation of the pyrroline ring would give rise to peramine. In Epichloe species that produce only peramine, the peramine synthetase gene is not localized in a gene cluster, in contrast to Metarhizium species that contain additional pyrrolopyrazine biosynthesis genes. The 2-oxoglutarate-Fe(II) type oxidoreductase ppzC hydroxylates peramine to yield the newly identified compound 8-hydroxyperamine whereas ppzD converts L-proline into trans-4-hydroxy-L-proline, a precursor of peramine biosynthesis. The polypeptide is 2-oxoglutarate-Fe(II) type oxidoreductase ppzD (ppzD) (Metarhizium majus (strain ARSEF 297)).